The sequence spans 473 residues: TOX high mobility group box family member 2 (473 aa).

Disordered regions lie at residues Met-1–His-42, Gly-139–Tyr-211, Ser-277–Gln-302, and Leu-340–Arg-473. Residues Leu-8–Glu-20 are compositionally biased toward polar residues. Residues Tyr-25–Leu-63 are required for transcriptional activation. The segment covering Gly-153–Ser-164 has biased composition (low complexity). Residues Asp-171–Lys-188 are compositionally biased toward basic and acidic residues. The short motif at Ala-172 to Pro-201 is the Nuclear localization signal element. The segment covering Lys-189–Lys-199 has biased composition (basic residues). The HMG box DNA-binding region spans Pro-204–Arg-272. 2 stretches are compositionally biased toward low complexity: residues Leu-373–Pro-382 and Ser-415–Ser-440. Over residues Ser-463–Arg-473 the composition is skewed to polar residues.

In terms of tissue distribution, highly expressed in ovary, where it is restricted to undifferentiated granulosa cells. Expressed in hypothalamus, pituitary gland, testis and uterus.

It is found in the nucleus. In terms of biological role, putative transcriptional activator involved in the hypothalamo-pituitary-gonadal system. The polypeptide is TOX high mobility group box family member 2 (Tox2) (Rattus norvegicus (Rat)).